Reading from the N-terminus, the 294-residue chain is tRNA pseudouridine synthase B (294 aa).

Catalysis depends on Asp-39, which acts as the Nucleophile.

It belongs to the pseudouridine synthase TruB family. Type 1 subfamily.

It catalyses the reaction uridine(55) in tRNA = pseudouridine(55) in tRNA. Responsible for synthesis of pseudouridine from uracil-55 in the psi GC loop of transfer RNAs. The polypeptide is tRNA pseudouridine synthase B (Streptococcus pyogenes serotype M3 (strain ATCC BAA-595 / MGAS315)).